The following is a 533-amino-acid chain: Glucosidase 2 subunit beta (533 aa).

Residues 1 to 13 (MLLLLLLLPMCWA) form the signal peptide. At serine 23 the chain carries Phosphoserine. 2 LDL-receptor class A domains span residues 36–70 (FTCL…AACP) and 71–112 (NGSF…IVCE). 2 disulfides stabilise this stretch: cysteine 38-cysteine 57 and cysteine 55-cysteine 69. Substrate is bound at residue aspartate 48. Ca(2+) contacts are provided by glutamine 49, aspartate 52, tyrosine 54, aspartate 56, aspartate 62, and glutamate 63. Substrate is bound at residue aspartate 52. Asparagine 71 is a glycosylation site (N-linked (GlcNAc...) asparagine). Disulfide bonds link cysteine 76–cysteine 98, cysteine 96–cysteine 111, and cysteine 99–cysteine 115. A Phosphoserine; by PKC modification is found at serine 88. Residues aspartate 93, valine 95, aspartate 97, aspartate 103, and glutamate 104 each coordinate Ca(2+). The residue at position 165 (lysine 165) is an N6-succinyllysine. A Phosphoserine modification is found at serine 167. 2 EF-hand domains span residues 208–243 (RERE…DTDG) and 244–279 (DGAL…RDKY). Positions 221, 223, 225, and 232 each coordinate Ca(2+). Residues 284 to 363 (LPTEYPPSPP…SPTEEDRMPP (80 aa)) form a disordered region. Over residues 312-336 (TEEEDEDEEDEETEEDEDEEDEDSQ) the composition is skewed to acidic residues. A phosphoserine; by PKC mark is found at serine 388 and serine 395. In terms of domain architecture, MRH spans 418–519 (SQCYELTTNE…ELMTPAACPE (102 aa)). Cysteine 420 and cysteine 433 are disulfide-bonded. Serine 439 is subject to Phosphoserine; by PKC. Intrachain disulfides connect cysteine 476-cysteine 505 and cysteine 490-cysteine 517. A glycan (N-linked (GlcNAc...) asparagine) is linked at asparagine 481. The short motif at 530-533 (HDEL) is the Prevents secretion from ER element.

Heterodimer of a catalytic alpha subunit (GANAB) and a beta subunit (PRKCSH). Binds glycosylated PTPRC. As to expression, ubiquitous. Highly expressed in liver, spleen, lung, duodenum, stomach, adrenal gland, pituitary, testis, corpus luteum, uterus and fetal ovary.

Its subcellular location is the endoplasmic reticulum. The protein operates within glycan metabolism; N-glycan metabolism. In terms of biological role, regulatory subunit of glucosidase II that cleaves sequentially the 2 innermost alpha-1,3-linked glucose residues from the Glc(2)Man(9)GlcNAc(2) oligosaccharide precursor of immature glycoproteins. Required for efficient PKD1/Polycystin-1 biogenesis and trafficking to the plasma membrane of the primary cilia. The chain is Glucosidase 2 subunit beta (PRKCSH) from Bos taurus (Bovine).